Reading from the N-terminus, the 212-residue chain is Hemagglutinin 2 (212 aa).

It is found in the secreted. Its function is as follows. Induces agglutination of neuraminidase-treated erythrocytes. The polypeptide is Hemagglutinin 2 (hag2) (Eikenella corrodens).